A 90-amino-acid chain; its full sequence is Small ribosomal subunit protein uS15 (90 aa).

The protein belongs to the universal ribosomal protein uS15 family. In terms of assembly, part of the 30S ribosomal subunit. Forms a bridge to the 50S subunit in the 70S ribosome, contacting the 23S rRNA.

In terms of biological role, one of the primary rRNA binding proteins, it binds directly to 16S rRNA where it helps nucleate assembly of the platform of the 30S subunit by binding and bridging several RNA helices of the 16S rRNA. Functionally, forms an intersubunit bridge (bridge B4) with the 23S rRNA of the 50S subunit in the ribosome. This Campylobacter lari (strain RM2100 / D67 / ATCC BAA-1060) protein is Small ribosomal subunit protein uS15.